We begin with the raw amino-acid sequence, 330 residues long: Beta-ketoacyl-[acyl-carrier-protein] synthase III (330 aa).

Active-site residues include C114 and H255. The interval 256–260 (QANQR) is ACP-binding. The active site involves N285.

It belongs to the thiolase-like superfamily. FabH family. As to quaternary structure, homodimer.

It localises to the cytoplasm. The catalysed reaction is malonyl-[ACP] + acetyl-CoA + H(+) = 3-oxobutanoyl-[ACP] + CO2 + CoA. It functions in the pathway lipid metabolism; fatty acid biosynthesis. Its function is as follows. Catalyzes the condensation reaction of fatty acid synthesis by the addition to an acyl acceptor of two carbons from malonyl-ACP. Catalyzes the first condensation reaction which initiates fatty acid synthesis and may therefore play a role in governing the total rate of fatty acid production. Possesses both acetoacetyl-ACP synthase and acetyl transacylase activities. Its substrate specificity determines the biosynthesis of branched-chain and/or straight-chain of fatty acids. The polypeptide is Beta-ketoacyl-[acyl-carrier-protein] synthase III (Trichormus variabilis (strain ATCC 29413 / PCC 7937) (Anabaena variabilis)).